Here is a 127-residue protein sequence, read N- to C-terminus: MAQSVPPGDIQTQPGTKIVFNAPYDDKHTDHIKVINSSARRIGYGIKTTNMKRLGVDPPCGVFDPKEAVLLAVSCDAFAFGQEDTNNDRITVEWTNTPDGAAKQFRREWFQGDGMVRRKNLPIEYNP.

Ala2 carries the N-acetylalanine modification. One can recognise an MSP domain in the interval 9-126 (DIQTQPGTKI…RRKNLPIEYN (118 aa)).

In terms of tissue distribution, sperm.

Its subcellular location is the cell projection. It is found in the pseudopodium. The protein localises to the cytoplasm. The protein resides in the cytoskeleton. Its function is as follows. Central component in molecular interactions underlying sperm crawling. Forms an extensive filament system that extends from sperm villipoda, along the leading edge of the pseudopod. This is Major sperm protein 38 (msp-38) from Caenorhabditis elegans.